The sequence spans 214 residues: MAGAACCFSDEQFREACAELQKPALTGADWQLLVEASGITIYRLLDQPSGLYEYKVFGVLEGCSPALLTDVYMDLDYRKQWDQYVKELYEKESDEQMVAYWEVKYPFPLSNRDYVYTRQRRDLDVDRRKIYVVLAQSISAPQFPEKSGVIRVKQYKQSLAIESDGKKGSRVFMYYFDNPGGQIPSWLINWAAKNGVPNFLKDMVKACQNYHKKT.

N-acetylmethionine is present on M1. Residues M1–K212 form the START domain. Positions 72 and 78 each coordinate a 1,2-diacyl-sn-glycero-3-phosphocholine. S139 is subject to Phosphoserine. A 1,2-diacyl-sn-glycero-3-phosphocholine is bound at residue Q157.

In terms of assembly, interacts with ACOT13/THEM2. As to expression, abundant in liver of pups but levels in liver decrease 10-fold about 2 weeks after birth. In adult, highly expressed in epididymis, testis, kidney and bone-marrow derived mast cells.

Its subcellular location is the cytoplasm. Functionally, catalyzes the transfer of phosphatidylcholine between membranes. Binds a single lipid molecule. The chain is Phosphatidylcholine transfer protein (Pctp) from Mus musculus (Mouse).